The sequence spans 287 residues: Putative sugar uptake protein spyM18_2243 (287 aa).

10 helical membrane-spanning segments follow: residues 4-26 (IFYA…KIGG), 33-50 (LGMT…WLIV), 55-72 (TLQL…WSIG), 85-107 (VSVA…GVLV), 117-134 (FVVG…FYFS), 154-171 (FRAL…AVLF), 181-200 (SVIL…FMSF), 207-229 (YVIK…LLAA), 234-256 (LAIA…ILFL), and 268-285 (VVTG…LGVV).

This sequence belongs to the GRP transporter (TC 2.A.7.5) family.

It localises to the cell membrane. The protein is Putative sugar uptake protein spyM18_2243 of Streptococcus pyogenes serotype M18 (strain MGAS8232).